A 76-amino-acid chain; its full sequence is MTPVHFSFTSAFILGLMGLAFHRTHLLSALLCLEGMMLSLFIALSLWALQMEATGYSVAPMLLLAFSACEASAGLA.

3 helical membrane-spanning segments follow: residues 1–21 (MTPV…GLAF), 29–49 (ALLC…LWAL), and 56–76 (YSVA…AGLA).

Belongs to the complex I subunit 4L family.

The protein localises to the mitochondrion membrane. It carries out the reaction a ubiquinone + NADH + 5 H(+)(in) = a ubiquinol + NAD(+) + 4 H(+)(out). Functionally, core subunit of the mitochondrial membrane respiratory chain NADH dehydrogenase (Complex I) which catalyzes electron transfer from NADH through the respiratory chain, using ubiquinone as an electron acceptor. Part of the enzyme membrane arm which is embedded in the lipid bilayer and involved in proton translocation. In Oncorhynchus masou (Cherry salmon), this protein is NADH-ubiquinone oxidoreductase chain 4L (MT-ND4L).